Reading from the N-terminus, the 117-residue chain is MSEKKNCKNSSTNNNQTQDPSRNELQVPRSFVDRVVQDERDVQSQSSSTINTLLTLLDCLADYIMERVGLEASNNGSMRNTSQDREREVDNNREPHSAESDVTRFLFDEMPKSRKND.

Disordered regions lie at residues Met1–Ser30 and Glu71–Asp117. Polar residues predominate over residues Ala72–Thr81. Residues Ser82–Asp117 are compositionally biased toward basic and acidic residues.

In terms of assembly, may interact with the N-terminus of HD.

The sequence is that of Huntingtin-interacting protein M from Homo sapiens (Human).